A 932-amino-acid polypeptide reads, in one-letter code: MAWTEKDVENGKESDSLGNNGFLKGVQSSSDSKGSPVRISPVKKSFEGKDAITYANILRSRNKFVDALAIYESVLQKDSGSIESLIGKGICLQMQNMGRLAFESFAEAIKLDPQNACALTHCGILYKDEGRLVEAAESYQKALKADPSYKPAAECLAIVLTDIGTSLKLAGNSQEGIQKYYEAIKIDSHYAPAYYNLGVVYSEMMQYDMALNCYEKAAIERPMYAEAYCNMGVIYKNRGDLESAIACYERCLAVSPNFEIAKNNMAIALTDLGTKVKLEGDINQGVAYYKKALYYNWHYADAMYNLGVAYGEMLKFDMAIVFYELAFHFNPHCAEACNNLGVIYKDRDNLDKAVECYQMALTIKPNFSQSLNNLGVVYTVQGKMDAAASMIEKAIIANPTYAEAYNNLGVLYRDAGNISLAIEAYEQCLKIDPDSRNAGQNRLLAMNYINEGSDDKLYEAHRDWGWRFMRLYQQYNSWDNSKDPERQLVIGYVSPDYFTHSVSYFIEAPLAYHDYANYKVVIYSAVVKADAKTNRFRDKVLKKGGVWRDIYGIDEKKVSSMIREDKVDIMIELTGHTANNKLGMMACRPAPVQVTWIGYPNTTGLPTIDYRITDSMADPPSTKQKHVEELVRLPDSFLCYTPSPEAGPVSPAPALTNGFVTFGSFNNLAKITPKVLQVWARILCAVPHSRLIVKCKPFGCDSVRQRFLSILEQLGLEPQRVDLVPLILLNHDHMQAYSLMDISLDTFPYAGTTTTCESLYMGVPCVTMGGSVHAHNVGVSLLKTVGLRKLVARNEDEYVELAIQLASDVTSLSNLRMSLRELMAKSPLCDGAQFTQNLESTYRSMWRRYCDGDVPSLRRMELLQQQQQTLAELVVPEESPVSPIEKTRISASKDGPIKENGFTVSPALVYNSSTIEENGVQLNQAGNPGKQS.

Over residues 1–15 the composition is skewed to basic and acidic residues; that stretch reads MAWTEKDVENGKESD. The interval 1 to 39 is disordered; it reads MAWTEKDVENGKESDSLGNNGFLKGVQSSSDSKGSPVRI. TPR repeat units lie at residues 48 to 81, 82 to 115, 116 to 149, 157 to 190, 191 to 224, 225 to 258, 266 to 299, 300 to 333, 334 to 367, 369 to 401, and 402 to 435; these read GKDA…DSGS, IESL…DPQN, ACAL…DPSY, AIVL…DSHY, APAY…RPMY, AEAY…SPNF, AIAL…NWHY, ADAM…NPHC, AEAC…KPNF, QSLN…NPTY, and AEAY…DPDS. Residues 436-932 are catalytic region; sequence RNAGQNRLLA…NQAGNPGKQS (497 aa). The tract at residues 881–902 is disordered; it reads VSPIEKTRISASKDGPIKENGF.

This sequence belongs to the glycosyltransferase 41 family. O-GlcNAc transferase subfamily. In terms of tissue distribution, expressed in stems, leaves and flowers. Expressed during all stages of corolla maturation.

Its subcellular location is the nucleus. It catalyses the reaction L-seryl-[protein] + UDP-N-acetyl-alpha-D-glucosamine = 3-O-(N-acetyl-beta-D-glucosaminyl)-L-seryl-[protein] + UDP + H(+). It carries out the reaction L-threonyl-[protein] + UDP-N-acetyl-alpha-D-glucosamine = 3-O-(N-acetyl-beta-D-glucosaminyl)-L-threonyl-[protein] + UDP + H(+). It functions in the pathway protein modification; protein glycosylation. Probable O-linked N-acetylglucosamine transferase (OGT) involved in various processes such as gibberellin (GA) signaling pathway. OGTs catalyze the addition of nucleotide-activated sugars directly onto the polypeptide through O-glycosidic linkage with the hydroxyl of serine or threonine. Probably acts by adding O-linked sugars to yet unknown proteins. This is Probable UDP-N-acetylglucosamine--peptide N-acetylglucosaminyltransferase SPINDLY (SPY) from Petunia hybrida (Petunia).